Consider the following 358-residue polypeptide: Probable protein phosphatase 2C 34 (358 aa).

Residues 62-349 (LASVFSRRGE…DDISAVCLFF (288 aa)) form the PPM-type phosphatase domain. Mn(2+) contacts are provided by aspartate 98, glycine 99, aspartate 294, and aspartate 340.

The protein belongs to the PP2C family. Mg(2+) serves as cofactor. The cofactor is Mn(2+).

It catalyses the reaction O-phospho-L-seryl-[protein] + H2O = L-seryl-[protein] + phosphate. The enzyme catalyses O-phospho-L-threonyl-[protein] + H2O = L-threonyl-[protein] + phosphate. The polypeptide is Probable protein phosphatase 2C 34 (Arabidopsis thaliana (Mouse-ear cress)).